Reading from the N-terminus, the 165-residue chain is Small ribosomal subunit protein uS5 (165 aa).

The 64-residue stretch at 10 to 73 (QIEKLISLNR…TSARKNLRFV (64 aa)) folds into the S5 DRBM domain.

This sequence belongs to the universal ribosomal protein uS5 family. Part of the 30S ribosomal subunit. Contacts proteins S4 and S8.

Its function is as follows. With S4 and S12 plays an important role in translational accuracy. Functionally, located at the back of the 30S subunit body where it stabilizes the conformation of the head with respect to the body. The protein is Small ribosomal subunit protein uS5 of Borreliella afzelii (strain PKo) (Borrelia afzelii).